Here is a 235-residue protein sequence, read N- to C-terminus: High affinity immunoglobulin epsilon receptor subunit beta (235 aa).

Positions 1-23 (MDTENRSRADLALPNPQESSSAP) are disordered. At 1–51 (MDTENRSRADLALPNPQESSSAPDIELLEASPAKAAPPKQTWRTFLKKELE) the chain is on the cytoplasmic side. Residues 52–71 (FLGATQILVGLICLCFGTIV) form a helical membrane-spanning segment. At 72–89 (CSVLYVSDFDEEVLLLYK) the chain is on the extracellular side. The helical transmembrane segment at 90–109 (LGYPFWGAVLFVLSGFLSII) threads the bilayer. Residues 110 to 122 (SERKNTLYLVRGS) are Cytoplasmic-facing. Residues 123–142 (LGANIVSSIAAGTGIAMLIL) form a helical membrane-spanning segment. The Extracellular segment spans residues 143-171 (NLTNNFAYMNNCKNVTEDDGCFVASFTTE). Residues 172-191 (LVLMMLFLTILAFCSAVLFT) form a helical membrane-spanning segment. Residues 192–235 (IYRIGQELESKKVPDDRLYEELNVYSPIYSELEDKGETSSPVDS) are Cytoplasmic-facing. Y210 and Y216 each carry phosphotyrosine. A Phosphoserine modification is found at S217. Residue Y220 is modified to Phosphotyrosine.

This sequence belongs to the MS4A family. Tetramer of an alpha chain, a beta chain, and two disulfide linked gamma chains. Binds LILRB1. Interacts with FGR. Interacts with FGR and FES/FPS. Interacts with LYN. Post-translationally, phosphorylated on tyrosine residues by LYN.

The protein resides in the membrane. In terms of biological role, high affinity receptor that binds to the Fc region of immunoglobulins epsilon. Aggregation of FCER1 by multivalent antigens is required for the full mast cell response, including the release of preformed mediators (such as histamine) by degranulation and de novo production of lipid mediators and cytokines. Also mediates the secretion of important lymphokines. Binding of allergen to receptor-bound IgE leads to cell activation and the release of mediators responsible for the manifestations of allergy. This Mus musculus (Mouse) protein is High affinity immunoglobulin epsilon receptor subunit beta (Ms4a2).